We begin with the raw amino-acid sequence, 158 residues long: Cyclic pyranopterin monophosphate synthase (158 aa).

Substrate is bound by residues 76–78 and 114–115; these read LCH and ME. Asp129 is an active-site residue.

Belongs to the MoaC family. Homohexamer; trimer of dimers.

It carries out the reaction (8S)-3',8-cyclo-7,8-dihydroguanosine 5'-triphosphate = cyclic pyranopterin phosphate + diphosphate. It functions in the pathway cofactor biosynthesis; molybdopterin biosynthesis. Its function is as follows. Catalyzes the conversion of (8S)-3',8-cyclo-7,8-dihydroguanosine 5'-triphosphate to cyclic pyranopterin monophosphate (cPMP). This chain is Cyclic pyranopterin monophosphate synthase, found in Shewanella woodyi (strain ATCC 51908 / MS32).